Here is a 274-residue protein sequence, read N- to C-terminus: Cytochrome b-c1 complex subunit Rieske, mitochondrial (274 aa).

Residues 79–103 (SHTDVKVPDFSEYRRPEVLDSTKSS) are Mitochondrial matrix-facing. The helical transmembrane segment at 104 to 140 (RESSEARKGFSYLVTAVTTVGVAYAAKNAVTQFVSSM) threads the bilayer. Topologically, residues 141-274 (SASADVLALA…FTSDDMVIVG (134 aa)) are mitochondrial intermembrane. The 86-residue stretch at 187-272 (EAAVELSQLR…YEFTSDDMVI (86 aa)) folds into the Rieske domain. Positions 217, 219, 236, 239, and 241 each coordinate [2Fe-2S] cluster. Cys222 and Cys238 form a disulfide bridge.

It belongs to the Rieske iron-sulfur protein family. In terms of assembly, component of the ubiquinol-cytochrome c oxidoreductase (cytochrome b-c1 complex, complex III, CIII), a multisubunit enzyme composed of 11 subunits. The complex is composed of 3 respiratory subunits cytochrome b, cytochrome c1 and Rieske protein UQCRFS1, 2 core protein subunits UQCRC1/QCR1 and UQCRC2/QCR2, and 6 low-molecular weight protein subunits UQCRH/QCR6, UQCRB/QCR7, UQCRQ/QCR8, UQCR10/QCR9, UQCR11/QCR10 and subunit 9, the cleavage product of Rieske protein UQCRFS1. The complex exists as an obligatory dimer and forms supercomplexes (SCs) in the inner mitochondrial membrane with NADH-ubiquinone oxidoreductase (complex I, CI) and cytochrome c oxidase (complex IV, CIV), resulting in different assemblies (supercomplex SCI(1)III(2)IV(1) and megacomplex MCI(2)III(2)IV(2)). Incorporation of the Rieske protein UQCRFS1 is the penultimate step in complex III assembly. Interacts with TTC19, which is involved in the clearance of UQCRFS1 fragments. Component of the ubiquinol-cytochrome c oxidoreductase (cytochrome b-c1 complex, complex III, CIII). Subunit 9 corresponds to the mitochondrial targeting sequence (MTS) of Rieske protein UQCRFS1. It is retained after processing and incorporated inside complex III, where it remains bound to the complex and localizes between the 2 core subunits UQCRC1/QCR1 and UQCRC2/QCR2. [2Fe-2S] cluster is required as a cofactor. Proteolytic processing is necessary for the correct insertion of UQCRFS1 in the complex III dimer. Several fragments are generated during UQCRFS1 insertion, most probably due to the endogenous matrix-processing peptidase (MPP) activity of the 2 core protein subunits UQCRC1/QCR1 and UQCRC2/QCR2, which are homologous to the 2 mitochondrial-processing peptidase (MPP) subunits beta-MPP and alpha-MPP respectively. The action of the protease is also necessary for the clearance of the UQCRFS1 fragments.

It localises to the mitochondrion inner membrane. The catalysed reaction is a quinol + 2 Fe(III)-[cytochrome c](out) = a quinone + 2 Fe(II)-[cytochrome c](out) + 2 H(+)(out). Functionally, component of the ubiquinol-cytochrome c oxidoreductase, a multisubunit transmembrane complex that is part of the mitochondrial electron transport chain which drives oxidative phosphorylation. The respiratory chain contains 3 multisubunit complexes succinate dehydrogenase (complex II, CII), ubiquinol-cytochrome c oxidoreductase (cytochrome b-c1 complex, complex III, CIII) and cytochrome c oxidase (complex IV, CIV), that cooperate to transfer electrons derived from NADH and succinate to molecular oxygen, creating an electrochemical gradient over the inner membrane that drives transmembrane transport and the ATP synthase. The cytochrome b-c1 complex catalyzes electron transfer from ubiquinol to cytochrome c, linking this redox reaction to translocation of protons across the mitochondrial inner membrane, with protons being carried across the membrane as hydrogens on the quinol. In the process called Q cycle, 2 protons are consumed from the matrix, 4 protons are released into the intermembrane space and 2 electrons are passed to cytochrome c. The Rieske protein is a catalytic core subunit containing a [2Fe-2S] iron-sulfur cluster. It cycles between 2 conformational states during catalysis to transfer electrons from the quinol bound in the Q(0) site in cytochrome b to cytochrome c1. Incorporation of UQCRFS1 is the penultimate step in complex III assembly. In terms of biological role, component of the ubiquinol-cytochrome c oxidoreductase (cytochrome b-c1 complex, complex III, CIII). UQCRFS1 undergoes proteolytic processing once it is incorporated in the complex III dimer. One of the fragments, called subunit 9, corresponds to its mitochondrial targeting sequence (MTS). The proteolytic processing is necessary for the correct insertion of UQCRFS1 in the complex III dimer, but the persistence of UQCRFS1-derived fragments may prevent newly imported UQCRFS1 to be processed and assembled into complex III and is detrimental for the complex III structure and function. This Symphalangus syndactylus (Siamang) protein is Cytochrome b-c1 complex subunit Rieske, mitochondrial (UQCRFS1).